Consider the following 453-residue polypeptide: Armadillo repeat-containing X-linked protein 1 (453 aa).

At 1-6 the chain is on the mitochondrial intermembrane side; sequence MGRTRE. 2 mitochondrion outer membrane (MOM)-targeting sequence regions span residues 1 to 6 and 26 to 36; these read MGRTRE and RLAWGRDENEK. A helical; Signal-anchor membrane pass occupies residues 7–29; it reads AGCVAAGVVIGAGACYCVYRLAW. Topologically, residues 30–453 are cytoplasmic; it reads GRDENEKIWD…VKVLKVLTKL (424 aa). Disordered stretches follow at residues 58-77 and 132-182; these read AKTN…SEVK and ISGN…RAPA. A compositionally biased stretch (basic residues) spans 167-177; that stretch reads GKSKGKARSKS. ARM repeat units lie at residues 195–235, 237–276, 358–398, and 415–453; these read PYKI…NNAA, SFNQ…NLSV, PAMT…NIND, and SSLF…LTKL.

Belongs to the eutherian X-chromosome-specific Armcx family. In terms of assembly, interacts with MIRO1. As to expression, expressed at high levels ovary, heart, testis, prostate, brain, spleen and colon. Expressed at very low levels in liver and thymus. Not expressed in peripheral blood leukocytes. Not or reduced expressed in lung, prostate, colon, pancreas and ovarian carcinomas.

Its subcellular location is the mitochondrion. The protein resides in the mitochondrion outer membrane. Regulates mitochondrial transport during axon regeneration. Increases the proportion of motile mitochondria by recruiting stationary mitochondria into the motile pool. Enhances mitochondria movement and neurite growth in both adult axons and embryonic neurons. Promotes neuronal survival and axon regeneration after nerve injury. May link mitochondria to the Trak1-kinesin motor complex via its interaction with MIRO1. The polypeptide is Armadillo repeat-containing X-linked protein 1 (ARMCX1) (Homo sapiens (Human)).